The sequence spans 330 residues: AA9 family lytic polysaccharide monooxygenase E (330 aa).

A signal peptide spans 1-20 (MRSTLVTGLIAGLLSQQAAA). The Cu(2+) site is built by histidine 21 and histidine 99. An intrachain disulfide couples cysteine 58 to cysteine 193. Residues histidine 179 and glutamine 188 each contribute to the O2 site. Position 190 (tyrosine 190) interacts with Cu(2+). A CBM1 domain is found at 293–330 (CSVAKYQQCGGTGYTGCTSCASGSTCSAVSPPYYSQCV).

Belongs to the polysaccharide monooxygenase AA9 family. Cu(2+) is required as a cofactor.

Its subcellular location is the secreted. The enzyme catalyses [(1-&gt;4)-beta-D-glucosyl]n+m + reduced acceptor + O2 = 4-dehydro-beta-D-glucosyl-[(1-&gt;4)-beta-D-glucosyl]n-1 + [(1-&gt;4)-beta-D-glucosyl]m + acceptor + H2O.. Its function is as follows. Lytic polysaccharide monooxygenase (LPMO) that depolymerizes crystalline and amorphous polysaccharides via the oxidation of scissile alpha- or beta-(1-4)-glycosidic bonds, yielding exclusively C1 oxidation products. Catalysis by LPMOs requires the reduction of the active-site copper from Cu(II) to Cu(I) by a reducing agent and H(2)O(2) or O(2) as a cosubstrate. The polypeptide is AA9 family lytic polysaccharide monooxygenase E (gh61-5) (Neurospora crassa (strain ATCC 24698 / 74-OR23-1A / CBS 708.71 / DSM 1257 / FGSC 987)).